Here is a 197-residue protein sequence, read N- to C-terminus: Imidazoleglycerol-phosphate dehydratase (197 aa).

The protein belongs to the imidazoleglycerol-phosphate dehydratase family.

The protein localises to the cytoplasm. The enzyme catalyses D-erythro-1-(imidazol-4-yl)glycerol 3-phosphate = 3-(imidazol-4-yl)-2-oxopropyl phosphate + H2O. The protein operates within amino-acid biosynthesis; L-histidine biosynthesis; L-histidine from 5-phospho-alpha-D-ribose 1-diphosphate: step 6/9. The protein is Imidazoleglycerol-phosphate dehydratase of Alkalilimnicola ehrlichii (strain ATCC BAA-1101 / DSM 17681 / MLHE-1).